Here is a 121-residue protein sequence, read N- to C-terminus: Small ribosomal subunit protein uS13 (121 aa).

Residues 97 to 121 are disordered; sequence VRGQRTRTNARTRRGARKTVAGKKK. The span at 100–121 shows a compositional bias: basic residues; that stretch reads QRTRTNARTRRGARKTVAGKKK.

The protein belongs to the universal ribosomal protein uS13 family. In terms of assembly, part of the 30S ribosomal subunit. Forms a loose heterodimer with protein S19. Forms two bridges to the 50S subunit in the 70S ribosome.

Located at the top of the head of the 30S subunit, it contacts several helices of the 16S rRNA. In the 70S ribosome it contacts the 23S rRNA (bridge B1a) and protein L5 of the 50S subunit (bridge B1b), connecting the 2 subunits; these bridges are implicated in subunit movement. Contacts the tRNAs in the A and P-sites. This chain is Small ribosomal subunit protein uS13, found in Synechococcus sp. (strain CC9605).